The primary structure comprises 151 residues: Melatonin receptor type 1C (151 aa).

The Cytoplasmic segment spans residues 1 to 13 (CHSLRYDRLYSRR). Residues 14-34 (NTCLYLLLTWMLTALATVPNF) traverse the membrane as a helical segment. Topologically, residues 35 to 58 (LVGSLKYDPRVFSCTFTQTASSSY) are extracellular. The chain crosses the membrane as a helical span at residues 59-79 (TVCVVLIHFLVPLGVVSFCYL). Residues 80-109 (RIWTLVIRVKGRVRPNPKVRAADLRNFLTM) lie on the Cytoplasmic side of the membrane. Residues 110-130 (FVVFVLFAVCWAPLNFIGLAV) form a helical membrane-spanning segment. The Extracellular portion of the chain corresponds to 131–143 (AINPAKVAPNIPE). Residues 144–151 (WLFVTSYF) form a helical membrane-spanning segment.

This sequence belongs to the G-protein coupled receptor 1 family.

It localises to the cell membrane. In terms of biological role, high affinity receptor for melatonin. The activity of this receptor is mediated by pertussis toxin sensitive G proteins that inhibits adenylate cyclase activity. In Danio rerio (Zebrafish), this protein is Melatonin receptor type 1C (mtnr1c).